We begin with the raw amino-acid sequence, 456 residues long: Glycine receptor subunit alpha-4 (456 aa).

The signal sequence occupies residues 1 to 27 (MTTLVPASLFLLLWTLPGKVLLSVALA). Residues 28 to 256 (KEDVKSGLKG…KFHLERQMGY (229 aa)) lie on the Extracellular side of the membrane. Asn-71 carries an N-linked (GlcNAc...) asparagine glycan. Intrachain disulfides connect Cys-171–Cys-185 and Cys-232–Cys-243. 236–241 (YNTGKF) is a binding site for strychnine. The helical transmembrane segment at 257–278 (YLIQMYIPSLLIVILSWVSFWI) threads the bilayer. The Cytoplasmic portion of the chain corresponds to 279 to 283 (NMDAA). The chain crosses the membrane as a helical span at residues 284–304 (PARVGLGITTVLTMTTQSSGS). The Extracellular portion of the chain corresponds to 305-315 (RASLPKVSYVK). The chain crosses the membrane as a helical span at residues 316–336 (AIDIWMAVCLLFVFAALLEYA). Over 337-423 (AVNFVSRQHK…YVDRAKRIDT (87 aa)) the chain is Cytoplasmic. A helical transmembrane segment spans residues 424–444 (ISRAVFPFTFLVFNIFYWVVY). Residues 445-456 (KVLRSEDIHQAL) lie on the Extracellular side of the membrane.

The protein belongs to the ligand-gated ion channel (TC 1.A.9) family. Glycine receptor (TC 1.A.9.3) subfamily. GLRA4 sub-subfamily. Homopentamer (in vitro). Heteropentamer composed of GLRA4 and GLRB. Detected in the retina inner plexiform layer, especially at the border between layer three and four (at protein level).

It is found in the postsynaptic cell membrane. The protein resides in the synapse. It localises to the perikaryon. The protein localises to the cell projection. Its subcellular location is the dendrite. It is found in the cell membrane. It carries out the reaction chloride(in) = chloride(out). Inhibited by strychnine. Its function is as follows. Glycine receptors are ligand-gated chloride channels. Channel opening is triggered by extracellular glycine. Channel opening is also triggered by taurine and beta-alanine. Plays a role in the down-regulation of neuronal excitability. Contributes to the generation of inhibitory postsynaptic currents. The sequence is that of Glycine receptor subunit alpha-4 (Glra4) from Mus musculus (Mouse).